Here is a 496-residue protein sequence, read N- to C-terminus: Probable cytosol aminopeptidase (496 aa).

The Mn(2+) site is built by lysine 251 and aspartate 256. Lysine 263 is a catalytic residue. Residues aspartate 274, aspartate 333, and glutamate 335 each coordinate Mn(2+). The active site involves arginine 337.

This sequence belongs to the peptidase M17 family. Mn(2+) serves as cofactor.

It localises to the cytoplasm. It carries out the reaction Release of an N-terminal amino acid, Xaa-|-Yaa-, in which Xaa is preferably Leu, but may be other amino acids including Pro although not Arg or Lys, and Yaa may be Pro. Amino acid amides and methyl esters are also readily hydrolyzed, but rates on arylamides are exceedingly low.. It catalyses the reaction Release of an N-terminal amino acid, preferentially leucine, but not glutamic or aspartic acids.. Functionally, presumably involved in the processing and regular turnover of intracellular proteins. Catalyzes the removal of unsubstituted N-terminal amino acids from various peptides. This chain is Probable cytosol aminopeptidase, found in Acidovorax sp. (strain JS42).